The sequence spans 636 residues: Probable potassium transport system protein Kup (636 aa).

12 helical membrane passes run 22 to 42 (LGLLVAAVGVVYGDIGTSPLY), 64 to 84 (ILSLILWSLLWVVSFKYVMFI), 115 to 135 (LMVICGLIGASLFYGDSMITP), 150 to 170 (FDGIDHWVVPISLVVLVALFL), 182 to 202 (LFGPIMVTWFVVLGALGVHGI), 220 to 240 (FFVVHPGMGVAILGAVVLALT), 261 to 281 (WFILVLPALVLNYFGQGALLL), 293 to 313 (LLAPSWALLPLVGLATMATVI), 351 to 371 (IYIGAVNWTLMVGVVLLVIGF), 383 to 403 (VAVTGTMLMTTILVSAVMLLL), 408 to 428 (PVLAVPLLMGFLFVDGLFFAA), and 433 to 453 (IVQGGAFPVLAGGVLFLLMST).

This sequence belongs to the HAK/KUP transporter (TC 2.A.72) family.

It is found in the cell inner membrane. It carries out the reaction K(+)(in) + H(+)(in) = K(+)(out) + H(+)(out). Functionally, transport of potassium into the cell. Likely operates as a K(+):H(+) symporter. In Pseudomonas putida (strain GB-1), this protein is Probable potassium transport system protein Kup.